The sequence spans 998 residues: Ephrin type-B receptor 3 (998 aa).

The signal sequence occupies residues Met1 to Ala33. Residues Gly34 to Leu559 lie on the Extracellular side of the membrane. An Eph LBD domain is found at Glu39–Ala217. Cysteines 81 and 199 form a disulfide. Fibronectin type-III domains lie at Val339–Ala451 and Ala452–Glu545. N-linked (GlcNAc...) asparagine glycosylation is found at Asn351 and Asn445. The helical transmembrane segment at Ile560 to Val580 threads the bilayer. Residues Cys581–Val998 lie on the Cytoplasmic side of the membrane. Phosphotyrosine; by autocatalysis is present on Tyr614. Residues Val633 to Ile896 enclose the Protein kinase domain. ATP contacts are provided by residues Ile639–Val647 and Lys665. Asp758 acts as the Proton acceptor in catalysis. The 65-residue stretch at Thr925 to Gln989 folds into the SAM domain. The short motif at Val996–Val998 is the PDZ-binding element.

It belongs to the protein kinase superfamily. Tyr protein kinase family. Ephrin receptor subfamily. In terms of assembly, heterotetramer upon binding of the ligand. The heterotetramer is composed of an ephrin dimer and a receptor dimer. Oligomerization is probably required to induce biological responses. Post-translationally, phosphorylated. Autophosphorylates upon ligand-binding. Autophosphorylation on Tyr-614 is required for interaction with SH2 domain-containing proteins. In terms of processing, ubiquitinated by RNF186, mainly through 'Lys-48' and 'Lys-63'-linked polyubiquitin chains. Ubiquitous.

It localises to the cell membrane. It is found in the cell projection. The protein localises to the dendrite. The enzyme catalyses L-tyrosyl-[protein] + ATP = O-phospho-L-tyrosyl-[protein] + ADP + H(+). In terms of biological role, receptor tyrosine kinase which binds promiscuously transmembrane ephrin-B family ligands residing on adjacent cells, leading to contact-dependent bidirectional signaling into neighboring cells. The signaling pathway downstream of the receptor is referred to as forward signaling while the signaling pathway downstream of the ephrin ligand is referred to as reverse signaling. Generally has an overlapping and redundant function with EPHB2. Like EPHB2, functions in axon guidance during development regulating for instance the neurons forming the corpus callosum and the anterior commissure, 2 major interhemispheric connections between the temporal lobes of the cerebral cortex. In addition to its role in axon guidance also plays an important redundant role with other ephrin-B receptors in development and maturation of dendritic spines and the formation of excitatory synapses. Controls other aspects of development through regulation of cell migration and positioning. This includes angiogenesis, palate development and thymic epithelium development for instance. Forward and reverse signaling through the EFNB2/EPHB3 complex also regulate migration and adhesion of cells that tubularize the urethra and septate the cloaca. Finally, plays an important role in intestinal epithelium differentiation segregating progenitor from differentiated cells in the crypt. The polypeptide is Ephrin type-B receptor 3 (EPHB3) (Homo sapiens (Human)).